A 480-amino-acid polypeptide reads, in one-letter code: UDP-glucose 6-dehydrogenase 4 (480 aa).

NAD(+) contacts are provided by residues 8 to 13 (GAGYVG), Asp33, Arg38, 86 to 90 (VNTPT), 127 to 128 (ST), and Glu161. Residues 157–161 (EFLAE), 216–223 (KLAANAFL), and 256–269 (RIGP…VGFG) each bind substrate. Cys272 (nucleophile) is an active-site residue. 272–275 (CFQK) is an NAD(+) binding site. 334 to 335 (FK) is a substrate binding site. Residue Arg342 participates in NAD(+) binding. Ser393 is modified (phosphoserine). Residue Arg447 coordinates substrate.

This sequence belongs to the UDP-glucose/GDP-mannose dehydrogenase family.

It catalyses the reaction UDP-alpha-D-glucose + 2 NAD(+) + H2O = UDP-alpha-D-glucuronate + 2 NADH + 3 H(+). Its pathway is nucleotide-sugar biosynthesis; UDP-alpha-D-glucuronate biosynthesis; UDP-alpha-D-glucuronate from UDP-alpha-D-glucose: step 1/1. In terms of biological role, involved in the biosynthesis of UDP-glucuronic acid (UDP-GlcA), providing nucleotide sugars for cell-wall polymers. The chain is UDP-glucose 6-dehydrogenase 4 (UGD4) from Oryza sativa subsp. japonica (Rice).